Here is a 322-residue protein sequence, read N- to C-terminus: Endochitinase CH25 (322 aa).

The N-terminal stretch at 1–20 (MKSCLLLFLIFSFLLSFSLA) is a signal peptide. A Chitin-binding type-1 domain is found at 21–62 (EQCGRQAGGALCPNGLCCSEFGWCGDTEAYCKQPGCQSQCGG). 7 disulfide bridges follow: C23-C38, C32-C44, C37-C51, C56-C60, C92-C154, C166-C174, and C273-C305. The active-site Proton donor is the E136.

Belongs to the glycosyl hydrolase 19 family. Chitinase class I subfamily. As to expression, high expression in roots, moderate in floral tissues and low in stems and leaves.

The enzyme catalyses Random endo-hydrolysis of N-acetyl-beta-D-glucosaminide (1-&gt;4)-beta-linkages in chitin and chitodextrins.. The protein is Endochitinase CH25 of Brassica napus (Rape).